A 779-amino-acid chain; its full sequence is Mesenchyme-specific cell surface glycoprotein (779 aa).

The signal sequence occupies residues 1–15; the sequence is MQFGVPLLVLCLALG. 2 N-linked (GlcNAc...) asparagine glycosylation sites follow: Asn-203 and Asn-234. Residues 249-363 form a disordered region; it reads AGFPRGTTWS…QYPMIPTTPL (115 aa). Gly residues predominate over residues 262–351; sequence GAGGQGGQGQ…GGQGGQGGGN (90 aa). Residues Asn-369, Asn-451, and Asn-609 are each glycosylated (N-linked (GlcNAc...) asparagine).

Restricted to the primary mesenchyme cell lineage.

The protein localises to the cell membrane. Its function is as follows. Not known. Could be involved in mesenchyme cell migration, adhesion, fusion, or spicule formation. The polypeptide is Mesenchyme-specific cell surface glycoprotein (Strongylocentrotus purpuratus (Purple sea urchin)).